Reading from the N-terminus, the 189-residue chain is Transmembrane protein 229b (189 aa).

Topologically, residues 1–17 (MATTVTPEPLTALSRWY) are cytoplasmic. Residues 18 to 38 (LYAIHGYFCEVMFTAAWEFVV) traverse the membrane as a helical segment. The Extracellular segment spans residues 39-43 (NCNWK). The helical transmembrane segment at 44-64 (FPGVTSVWALFIYGTCILIVE) threads the bilayer. The Cytoplasmic segment spans residues 65–75 (RMYLCLKDRCN). Residues 76 to 96 (VLLRCIIYTLWTYFWEFGTGF) form a helical membrane-spanning segment. At 97-114 (LLRQFNACPWDYSEFKYN) the chain is on the extracellular side. Residues 115–135 (FMGLITAEYAVPWFCASFIVE) form a helical membrane-spanning segment. Residues 136–189 (RLVIRNTLRLRFDEVAESGQAEERLDRGGGGRGGRRGRGARAGATSANGYVKVD) are Cytoplasmic-facing. The segment at 158–189 (ERLDRGGGGRGGRRGRGARAGATSANGYVKVD) is disordered.

The protein belongs to the TMEM229 family.

It is found in the membrane. The chain is Transmembrane protein 229b (tmem229b) from Danio rerio (Zebrafish).